The following is a 452-amino-acid chain: Caspase-2 (452 aa).

Residue Ala-2 is modified to N-acetylalanine. The propeptide occupies 2–169 (AAPSAGSWST…TVEHSLDNKD (168 aa)). The CARD domain occupies 32–121 (MHPHHQETLK…GHLEDMLLTT (90 aa)). Position 157 is a phosphoserine (Ser-157). Catalysis depends on residues His-277 and Cys-320. Positions 326–333 (DRGVDQQD) are excised as a propeptide. Residues 327-336 (RGVDQQDGKN) show a composition bias toward basic and acidic residues. Residues 327–354 (RGVDQQDGKNHAGSPGCEESDAGKEKLP) are disordered. Phosphoserine is present on Ser-340.

This sequence belongs to the peptidase C14A family. Heterotetramer that consists of two anti-parallel arranged heterodimers, each one formed by a p18 subunit and a p12 subunit. Forms a complex named the PIDDosome with PIDD1 and CRADD. Interacts with NOL3 (via CARD domain); inhibits CASP2 activity in a phosphorylation-dependent manner. In terms of processing, the mature protease can process its own propeptide, but not that of other caspases. Expressed at higher levels in the embryonic lung, liver and kidney than in the heart and brain. In adults, higher level expression is seen in the placenta, lung, kidney, and pancreas than in the heart, brain, liver and skeletal muscle.

The enzyme catalyses Strict requirement for an Asp residue at P1, with 316-Asp being essential for proteolytic activity and has a preferred cleavage sequence of Val-Asp-Val-Ala-Asp-|-.. In terms of biological role, is a regulator of the cascade of caspases responsible for apoptosis execution. Might function by either activating some proteins required for cell death or inactivating proteins necessary for cell survival. Associates with PIDD1 and CRADD to form the PIDDosome, a complex that activates CASP2 and triggers apoptosis in response to genotoxic stress. Acts as a positive regulator of apoptosis. Its function is as follows. Acts as a negative regulator of apoptosis. Functionally, may function as an endogenous apoptosis inhibitor that antagonizes caspase activation and cell death. This Homo sapiens (Human) protein is Caspase-2 (CASP2).